Consider the following 152-residue polypeptide: Interleukin-1 family member 10 (152 aa).

This sequence belongs to the IL-1 family. Interacts with cargo receptor TMED10; the interaction mediates the translocation from the cytoplasm into the ERGIC (endoplasmic reticulum-Golgi intermediate compartment) and thereby secretion.

The protein resides in the cytoplasm. It is found in the endoplasmic reticulum-Golgi intermediate compartment. It localises to the secreted. Functionally, cytokine with immunomodulatory activity. Alone, does not induce cytokine production, but reduces IL22 and IL17A production by T-cells in response to heat-killed Candida albicans. Reduces IL36G-induced production of IL8 by peripheral blood mononuclear cells. Increases IL6 production by dendritic cells stimulated by bacterial lipopolysaccharides (LPS). Ligand for IL-36R/IL1RL2. The protein is Interleukin-1 family member 10 (Il1f10) of Mus musculus (Mouse).